Consider the following 143-residue polypeptide: Cofilin (143 aa).

The region spanning 5-137 (GVAVSDEALK…AYESVLEKIS (133 aa)) is the ADF-H domain.

This sequence belongs to the actin-binding proteins ADF family.

The protein localises to the cytoplasm. Its subcellular location is the cytoskeleton. It is found in the nucleus matrix. In terms of biological role, controls reversibly actin polymerization and depolymerization in a pH-sensitive manner. It has the ability to bind G- and F-actin in a 1:1 ratio of cofilin to actin. Binding to F-actin is regulated by tropomyosin. It is the major component of intranuclear and cytoplasmic actin rods. Required for accumulation of actin at the cell division site via depolymerizing actin at the cell ends. In association with myosin II has a role in the assembly of the contractile ring via severing actin filaments. Involved in the maintenance of the contractile ring once formed. In association with profilin and capping protein, has a role in the mitotic reorganization of the actin cytoskeleton. The polypeptide is Cofilin (COF1) (Ogataea parapolymorpha (strain ATCC 26012 / BCRC 20466 / JCM 22074 / NRRL Y-7560 / DL-1) (Yeast)).